The following is a 49-amino-acid chain: Protein YlcJ (49 aa).

Positions 1-21 (MSLVLCFLLMSLFFMYSFVLS) are cleaved as a signal peptide.

This chain is Protein YlcJ, found in Escherichia coli (strain K12).